We begin with the raw amino-acid sequence, 354 residues long: Opsin-1, short-wave-sensitive 2 (354 aa).

Over 1 to 43 (MKQQQQTPELFEDFHMPITLDVSNISAYSPFLVPQDHLGHSGV) the chain is Extracellular. Asn-24 carries N-linked (GlcNAc...) asparagine glycosylation. A helical transmembrane segment spans residues 44-68 (FMGMSAFMLFLFIAGTAINVLTIVC). Over 69–80 (TIQYKKLRSHLN) the chain is Cytoplasmic. Residues 81–106 (YILVNLAISNLWVSVFGSSVAFYAFY) traverse the membrane as a helical segment. Residues 107-120 (KKYFVFGPIGCKIE) are Extracellular-facing. Residues Cys-117 and Cys-194 are joined by a disulfide bond. A helical transmembrane segment spans residues 121 to 140 (GFTSTIGGMVSLWSLAVVAL). At 141–159 (ERWLVICKPLGNFTFKTPH) the chain is on the cytoplasmic side. The helical transmembrane segment at 160–183 (AIAGCILPWCMALAAGLPPLLGWS) threads the bilayer. The Extracellular segment spans residues 184-209 (RYIPEGLQCSCGPDWYTTNNKFNNES). N-linked (GlcNAc...) asparagine glycosylation is present at Asn-207. Residues 210 to 237 (YVMFLFCFCFAVPFSTIVFCYGQLLITL) form a helical membrane-spanning segment. Topologically, residues 238-259 (KLAAKAQADSASTQKAEREVTK) are cytoplasmic. Residues 260–283 (MVVVMVFGFLICWGPYAIFAIWVV) traverse the membrane as a helical segment. The Extracellular portion of the chain corresponds to 284–291 (SNRGAPFD). The chain crosses the membrane as a helical span at residues 292–316 (LRLATIPSCLCKASTVYNPVIYVLM). Residue Lys-303 is modified to N6-(retinylidene)lysine. Over 317 to 354 (NKQFRSCMMKMVFNKNIEEDEASSSSQVTQVSSVAPEK) the chain is Cytoplasmic.

Belongs to the G-protein coupled receptor 1 family. Opsin subfamily. Phosphorylated on some or all of the serine and threonine residues present in the C-terminal region. Retinal long single cone outer segments.

It localises to the membrane. Its function is as follows. Visual pigments are the light-absorbing molecules that mediate vision. They consist of an apoprotein, opsin, covalently linked to cis-retinal. The sequence is that of Opsin-1, short-wave-sensitive 2 (opn1sw2) from Danio rerio (Zebrafish).